A 310-amino-acid polypeptide reads, in one-letter code: Probable cell division protein WhiA (310 aa).

The segment at residues 277 to 310 is a DNA-binding region (H-T-H motif); it reads SLKELAEQVPDGPISKSGVNHRLKKLHEIAENLR.

Belongs to the WhiA family.

In terms of biological role, involved in cell division and chromosome segregation. The sequence is that of Probable cell division protein WhiA from Lactobacillus delbrueckii subsp. bulgaricus (strain ATCC 11842 / DSM 20081 / BCRC 10696 / JCM 1002 / NBRC 13953 / NCIMB 11778 / NCTC 12712 / WDCM 00102 / Lb 14).